An 81-amino-acid chain; its full sequence is Costars family protein ABRACL (81 aa).

Met-1 carries the post-translational modification N-acetylmethionine.

Belongs to the costars family.

This is Costars family protein ABRACL (ABRACL) from Bos taurus (Bovine).